The chain runs to 298 residues: Acetylglutamate kinase (298 aa).

Residues 67-68, Arg-89, and Asn-193 each bind substrate; that span reads GG.

The protein belongs to the acetylglutamate kinase family. ArgB subfamily.

It is found in the cytoplasm. The catalysed reaction is N-acetyl-L-glutamate + ATP = N-acetyl-L-glutamyl 5-phosphate + ADP. The protein operates within amino-acid biosynthesis; L-arginine biosynthesis; N(2)-acetyl-L-ornithine from L-glutamate: step 2/4. Functionally, catalyzes the ATP-dependent phosphorylation of N-acetyl-L-glutamate. The protein is Acetylglutamate kinase of Desulfitobacterium hafniense (strain DSM 10664 / DCB-2).